A 250-amino-acid polypeptide reads, in one-letter code: Probable transcriptional regulatory protein ckrop_1032 (250 aa).

The tract at residues 1–22 (MSGHSKWATTKHKKAANDAKRG) is disordered.

The protein belongs to the TACO1 family.

The protein localises to the cytoplasm. The protein is Probable transcriptional regulatory protein ckrop_1032 of Corynebacterium kroppenstedtii (strain DSM 44385 / JCM 11950 / CIP 105744 / CCUG 35717).